Here is a 510-residue protein sequence, read N- to C-terminus: Light-independent protochlorophyllide reductase subunit B (510 aa).

Position 36 (aspartate 36) interacts with [4Fe-4S] cluster. The Proton donor role is filled by aspartate 297. 432 to 433 (GM) is a substrate binding site.

Belongs to the ChlB/BchB/BchZ family. As to quaternary structure, protochlorophyllide reductase is composed of three subunits; ChlL, ChlN and ChlB. Forms a heterotetramer of two ChlB and two ChlN subunits. It depends on [4Fe-4S] cluster as a cofactor.

The protein localises to the plastid. It localises to the chloroplast. It carries out the reaction chlorophyllide a + oxidized 2[4Fe-4S]-[ferredoxin] + 2 ADP + 2 phosphate = protochlorophyllide a + reduced 2[4Fe-4S]-[ferredoxin] + 2 ATP + 2 H2O. Its pathway is porphyrin-containing compound metabolism; chlorophyll biosynthesis (light-independent). Component of the dark-operative protochlorophyllide reductase (DPOR) that uses Mg-ATP and reduced ferredoxin to reduce ring D of protochlorophyllide (Pchlide) to form chlorophyllide a (Chlide). This reaction is light-independent. The NB-protein (ChlN-ChlB) is the catalytic component of the complex. The chain is Light-independent protochlorophyllide reductase subunit B from Pinus thunbergii (Japanese black pine).